Reading from the N-terminus, the 312-residue chain is Methionyl-tRNA formyltransferase (312 aa).

A (6S)-5,6,7,8-tetrahydrofolate-binding site is contributed by 107-110 (SLLP).

Belongs to the Fmt family.

It carries out the reaction L-methionyl-tRNA(fMet) + (6R)-10-formyltetrahydrofolate = N-formyl-L-methionyl-tRNA(fMet) + (6S)-5,6,7,8-tetrahydrofolate + H(+). Its function is as follows. Attaches a formyl group to the free amino group of methionyl-tRNA(fMet). The formyl group appears to play a dual role in the initiator identity of N-formylmethionyl-tRNA by promoting its recognition by IF2 and preventing the misappropriation of this tRNA by the elongation apparatus. This chain is Methionyl-tRNA formyltransferase, found in Borreliella burgdorferi (strain ZS7) (Borrelia burgdorferi).